The primary structure comprises 535 residues: CTP synthase (535 aa).

The tract at residues 1 to 267 is amidoligase domain; it reads MTKYIFVTGG…DKLVCEHMKL (267 aa). Residue serine 13 coordinates CTP. Residue serine 13 coordinates UTP. Position 14–19 (14–19) interacts with ATP; it reads SLGKGI. Position 54 (tyrosine 54) interacts with L-glutamine. Residue aspartate 71 coordinates ATP. Mg(2+)-binding residues include aspartate 71 and glutamate 141. Residues 148–150, 188–193, and lysine 224 each bind CTP; these read DIE and KTKPTQ. UTP-binding positions include 188-193 and lysine 224; that span reads KTKPTQ. In terms of domain architecture, Glutamine amidotransferase type-1 spans 292-534; sequence TIGLVGKYVE…VGASLQASES (243 aa). Glycine 354 contacts L-glutamine. The Nucleophile; for glutamine hydrolysis role is filled by cysteine 381. Residues 382–385, glutamate 405, and arginine 462 contribute to the L-glutamine site; that span reads LGMQ. Residues histidine 507 and glutamate 509 contribute to the active site.

The protein belongs to the CTP synthase family. As to quaternary structure, homotetramer.

It catalyses the reaction UTP + L-glutamine + ATP + H2O = CTP + L-glutamate + ADP + phosphate + 2 H(+). The catalysed reaction is L-glutamine + H2O = L-glutamate + NH4(+). The enzyme catalyses UTP + NH4(+) + ATP = CTP + ADP + phosphate + 2 H(+). It functions in the pathway pyrimidine metabolism; CTP biosynthesis via de novo pathway; CTP from UDP: step 2/2. Its activity is regulated as follows. Allosterically activated by GTP, when glutamine is the substrate; GTP has no effect on the reaction when ammonia is the substrate. The allosteric effector GTP functions by stabilizing the protein conformation that binds the tetrahedral intermediate(s) formed during glutamine hydrolysis. Inhibited by the product CTP, via allosteric rather than competitive inhibition. Functionally, catalyzes the ATP-dependent amination of UTP to CTP with either L-glutamine or ammonia as the source of nitrogen. Regulates intracellular CTP levels through interactions with the four ribonucleotide triphosphates. This chain is CTP synthase, found in Bacillus pumilus (strain SAFR-032).